Here is a 113-residue protein sequence, read N- to C-terminus: Protein translation factor SUI1 homolog 1 (113 aa).

Positions 1–24 (MSELDSQVPTAFDPFADANAEDSG) are disordered. Ser-2 is subject to N-acetylserine.

It belongs to the SUI1 family.

Probably involved in translation. This Arabidopsis thaliana (Mouse-ear cress) protein is Protein translation factor SUI1 homolog 1.